An 875-amino-acid chain; its full sequence is MTLARFALALLFGVLPEVVGFESVLNDSLHHRHRHSPPPGLLYPHYLPTEQRHRRTRPPPPLPRFPRPPRALPALRPHALQAGHTPEPHPRGCPAGEPWVSVTDFGAPCLRWAEVPPSLERSSPAGWAQLRGQRHNFCRSPDGAGRPWCFYGDARGKVDWGYCDCRHGSVRLRGSKNEFEGTVEVYANGVWGTVCSSHWDDSDASVICHQLQLGGKGIAKQTPFSGLGLIPVYWSNVRCRGDEENILLCEKDIWQGGVCPQKMAAAVMCSFSHGPAFPIIRLVGGSSVHEGRVELYHAGQWGTICDDQWDDADAEVICRQLSLSGIAKAWHQAYFGEGSGPVMLDEVRCTGNELSIEQCPKSSWGEHNCGHKEDAGVSCTPLTDGVIRLAGGKGSHEGRLEVYYSGQWGTVCDDGWTELNTYVVCRQLGFKYGKQASANHFEESAGPIWLDDVSCSGKETRFLQCSRRQWGRHDCSHREDVGIACYPGSEGHRLSLGFPVRLMDGENKKEGRVEVFINGQWGTICDDGWTDKDAAVICRQLGYKGPARARTMAYFGEGKGPIHVDNVKCTGNERSLADCIKQDIGRHNCRHSEDAGVICDYFGKKASGNSNKESLSSVCGLRLLHRRQKRIIGGKNSLRGGWPWQVSLRLKSSHRDGRLLCGATLLSSCWVLTAAHCFKRYGNSTRNYAVRVGDYHTLVPEEFEEEIGVQEIVIHREYRPDSSDYDIALVRLQGPEEQCARFNSHVLPACLPLWRERPQKTASNCYITGWGDTGQAYSRTLQQAAIHLLPKRFCEERYKGRFTGRMLCAGNLHEHKHVDSCQGDSGGPLMCERPGESWVVYGVTSWGYGCGVKDSPGVYTKVSAFVPWIKSVTKL.

The N-terminal stretch at 1-20 is a signal peptide; it reads MTLARFALALLFGVLPEVVG. N26 carries N-linked (GlcNAc...) asparagine glycosylation. Positions 51 to 72 are disordered; that stretch reads QRHRRTRPPPPLPRFPRPPRAL. Over residues 58 to 71 the composition is skewed to pro residues; the sequence is PPPPLPRFPRPPRA. One can recognise a Kringle domain in the interval 93 to 165; that stretch reads CPAGEPWVSV…GKVDWGYCDC (73 aa). Disulfide bonds link C93/C165, C109/C149, C138/C163, C195/C259, C208/C269, C239/C249, C305/C369, C318/C379, C349/C359, C412/C475, C425/C485, C455/C465, C525/C589, C538/C599, C569/C579, C619/C750, C661/C677, C765/C831, C794/C808, and C821/C850. SRCR domains follow at residues 170 to 271, 280 to 381, 387 to 487, and 500 to 601; these read VRLR…MCSF, IRLV…SCTP, IRLA…ACYP, and VRLM…ICDY. The zymogen activation region stretch occupies residues 619-630; that stretch reads CGLRLLHRRQKR. Positions 631–874 constitute a Peptidase S1 domain; that stretch reads IIGGKNSLRG…FVPWIKSVTK (244 aa). H676 acts as the Charge relay system in catalysis. N-linked (GlcNAc...) asparagine glycosylation occurs at N683. The active-site Charge relay system is D726. Residue S825 is the Charge relay system of the active site.

Belongs to the peptidase S1 family.

It is found in the secreted. Functionally, plays a role in neuronal plasticity and the proteolytic action may subserve structural reorganizations associated with learning and memory operations. The polypeptide is Neurotrypsin (PRSS12) (Saguinus labiatus (Red-chested mustached tamarin)).